Here is a 326-residue protein sequence, read N- to C-terminus: Lipoyl synthase (326 aa).

7 residues coordinate [4Fe-4S] cluster: cysteine 74, cysteine 79, cysteine 85, cysteine 100, cysteine 104, cysteine 107, and serine 314. The Radical SAM core domain occupies 85–303; the sequence is CFGRGTATFM…EEEAYKMGFS (219 aa).

Belongs to the radical SAM superfamily. Lipoyl synthase family. Requires [4Fe-4S] cluster as cofactor.

The protein localises to the cytoplasm. It catalyses the reaction [[Fe-S] cluster scaffold protein carrying a second [4Fe-4S](2+) cluster] + N(6)-octanoyl-L-lysyl-[protein] + 2 oxidized [2Fe-2S]-[ferredoxin] + 2 S-adenosyl-L-methionine + 4 H(+) = [[Fe-S] cluster scaffold protein] + N(6)-[(R)-dihydrolipoyl]-L-lysyl-[protein] + 4 Fe(3+) + 2 hydrogen sulfide + 2 5'-deoxyadenosine + 2 L-methionine + 2 reduced [2Fe-2S]-[ferredoxin]. It functions in the pathway protein modification; protein lipoylation via endogenous pathway; protein N(6)-(lipoyl)lysine from octanoyl-[acyl-carrier-protein]: step 2/2. In terms of biological role, catalyzes the radical-mediated insertion of two sulfur atoms into the C-6 and C-8 positions of the octanoyl moiety bound to the lipoyl domains of lipoate-dependent enzymes, thereby converting the octanoylated domains into lipoylated derivatives. The protein is Lipoyl synthase of Acidovorax ebreus (strain TPSY) (Diaphorobacter sp. (strain TPSY)).